Reading from the N-terminus, the 394-residue chain is UPF0284 protein SYNW1869 (394 aa).

The protein belongs to the UPF0284 family.

This is UPF0284 protein SYNW1869 from Parasynechococcus marenigrum (strain WH8102).